The primary structure comprises 509 residues: 5-OH-xanthotoxin synthase (509 aa).

The chain crosses the membrane as a helical span at residues 5–25; it reads AVVILLILAFPIASVYVLFYH. Residues 368–373 form a substrate specificity region; the sequence is TGALLI. C449 lines the heme pocket.

It belongs to the cytochrome P450 family. Requires heme as cofactor.

It is found in the microsome membrane. The enzyme catalyses xanthotoxin + reduced [NADPH--hemoprotein reductase] + O2 = 5-hydroxyxanthotoxin + oxidized [NADPH--hemoprotein reductase] + H2O + 2 H(+). It functions in the pathway secondary metabolite biosynthesis. In terms of biological role, involved in the biosynthesis of coumarins and furanocoumarins (FCs), natural products required for defense responses against attacks by predators with potential medical and agroindustrial usages such as anticoagulant, rodenticide and artificial vanilla substitutes. Catalyzes the conversion of xanthotoxin into 5-hydroxyxanthotoxin. The sequence is that of 5-OH-xanthotoxin synthase from Ammi majus (Bishop's weed).